A 370-amino-acid polypeptide reads, in one-letter code: Cobalt-precorrin-5B C(1)-methyltransferase (370 aa).

The protein belongs to the CbiD family.

The enzyme catalyses Co-precorrin-5B + S-adenosyl-L-methionine = Co-precorrin-6A + S-adenosyl-L-homocysteine. Its pathway is cofactor biosynthesis; adenosylcobalamin biosynthesis; cob(II)yrinate a,c-diamide from sirohydrochlorin (anaerobic route): step 6/10. Its function is as follows. Catalyzes the methylation of C-1 in cobalt-precorrin-5B to form cobalt-precorrin-6A. This Pseudomonas syringae pv. tomato (strain ATCC BAA-871 / DC3000) protein is Cobalt-precorrin-5B C(1)-methyltransferase.